Reading from the N-terminus, the 170-residue chain is Transcriptional repressor NrdR (170 aa).

A zinc finger spans residues 3–34 (CPFCRHPDSRVVDSRTSEDGSSIRRRRQCPEC). The ATP-cone domain occupies 46–136 (LSVVKRSGVA…VYRGFSSLED (91 aa)). Residues 148–170 (RENEGDPDADGSADAPVRLTTSV) form a disordered region.

It belongs to the NrdR family. The cofactor is Zn(2+).

Its function is as follows. Negatively regulates transcription of bacterial ribonucleotide reductase nrd genes and operons by binding to NrdR-boxes. In Beutenbergia cavernae (strain ATCC BAA-8 / DSM 12333 / CCUG 43141 / JCM 11478 / NBRC 16432 / NCIMB 13614 / HKI 0122), this protein is Transcriptional repressor NrdR.